The chain runs to 422 residues: Fasciclin-like arabinogalactan protein 10 (422 aa).

The first 25 residues, 1–25 (MATSRAFTLFAFTLSLLTVASTVSG), serve as a signal peptide directing secretion. FAS1 domains lie at 26 to 172 (HNIT…NAPI) and 187 to 327 (GVSN…DNVL). Asn-27, Asn-128, Asn-162, Asn-190, and Asn-244 each carry an N-linked (GlcNAc...) asparagine glycan. The segment at 336 to 397 (SSSPAPAPEP…PTSSENSNAK (62 aa)) is disordered. Over residues 340–374 (APAPEPVSAPTPTPAKSPSPVEAPSPTAASPPAPP) the composition is skewed to pro residues. The span at 386–397 (DSPTSSENSNAK) shows a compositional bias: polar residues. Asn-398 carries the GPI-anchor amidated asparagine lipid modification. A propeptide spans 399 to 422 (AAFHVNAPALFTALVTIAATSLLL) (removed in mature form).

This sequence belongs to the fasciclin-like AGP family.

It localises to the cell membrane. In terms of biological role, may be a cell surface adhesion protein. The chain is Fasciclin-like arabinogalactan protein 10 (FLA10) from Arabidopsis thaliana (Mouse-ear cress).